A 180-amino-acid polypeptide reads, in one-letter code: Bifunctional protein PyrR (180 aa).

The PRPP-binding motif lies at 101-113 (VVLVDDVIFKGRT).

It belongs to the purine/pyrimidine phosphoribosyltransferase family. PyrR subfamily.

The enzyme catalyses UMP + diphosphate = 5-phospho-alpha-D-ribose 1-diphosphate + uracil. Its function is as follows. Regulates the transcription of the pyrimidine nucleotide (pyr) operon in response to exogenous pyrimidines. In terms of biological role, also displays a weak uracil phosphoribosyltransferase activity which is not physiologically significant. This is Bifunctional protein PyrR from Trichormus variabilis (strain ATCC 29413 / PCC 7937) (Anabaena variabilis).